The sequence spans 255 residues: Taurine import ATP-binding protein TauB (255 aa).

The region spanning 2–229 (LQISHLYADY…RFVAGESSRS (228 aa)) is the ABC transporter domain. 34-41 (GPSGCGKT) provides a ligand contact to ATP.

This sequence belongs to the ABC transporter superfamily. Taurine importer (TC 3.A.1.17.1) family. As to quaternary structure, the complex is composed of two ATP-binding proteins (TauB), two transmembrane proteins (TauC) and a solute-binding protein (TauA).

The protein localises to the cell inner membrane. It catalyses the reaction taurine(out) + ATP + H2O = taurine(in) + ADP + phosphate + H(+). In terms of biological role, part of the ABC transporter complex TauABC involved in taurine import. Responsible for energy coupling to the transport system. The sequence is that of Taurine import ATP-binding protein TauB from Escherichia coli O6:H1 (strain CFT073 / ATCC 700928 / UPEC).